The sequence spans 61 residues: Small ribosomal subunit protein uS14 (61 aa).

Zn(2+) contacts are provided by Cys24, Cys27, Cys40, and Cys43.

This sequence belongs to the universal ribosomal protein uS14 family. Zinc-binding uS14 subfamily. As to quaternary structure, part of the 30S ribosomal subunit. Contacts proteins S3 and S10. The cofactor is Zn(2+).

Binds 16S rRNA, required for the assembly of 30S particles and may also be responsible for determining the conformation of the 16S rRNA at the A site. This Clostridium botulinum (strain ATCC 19397 / Type A) protein is Small ribosomal subunit protein uS14.